The sequence spans 362 residues: Carbamoyl phosphate synthase small chain (362 aa).

The CPSase stretch occupies residues 1 to 169; it reads MGKRLLILED…TKTAYPAPGV (169 aa). L-glutamine is bound by residues S46, G220, and G222. In terms of domain architecture, Glutamine amidotransferase type-1 spans 172–358; that stretch reads NIVLVDFGLK…LELIDAFQLE (187 aa). Residue C247 is the Nucleophile of the active site. L-glutamine contacts are provided by M248, Q251, N289, G291, and Y292. Active-site residues include H331 and D333.

The protein belongs to the CarA family. Composed of two chains; the small (or glutamine) chain promotes the hydrolysis of glutamine to ammonia, which is used by the large (or ammonia) chain to synthesize carbamoyl phosphate. Tetramer of heterodimers (alpha,beta)4.

It catalyses the reaction hydrogencarbonate + L-glutamine + 2 ATP + H2O = carbamoyl phosphate + L-glutamate + 2 ADP + phosphate + 2 H(+). The enzyme catalyses L-glutamine + H2O = L-glutamate + NH4(+). Its pathway is amino-acid biosynthesis; L-arginine biosynthesis; carbamoyl phosphate from bicarbonate: step 1/1. It participates in pyrimidine metabolism; UMP biosynthesis via de novo pathway; (S)-dihydroorotate from bicarbonate: step 1/3. In terms of biological role, small subunit of the glutamine-dependent carbamoyl phosphate synthetase (CPSase). CPSase catalyzes the formation of carbamoyl phosphate from the ammonia moiety of glutamine, carbonate, and phosphate donated by ATP, constituting the first step of 2 biosynthetic pathways, one leading to arginine and/or urea and the other to pyrimidine nucleotides. The small subunit (glutamine amidotransferase) binds and cleaves glutamine to supply the large subunit with the substrate ammonia. This Streptococcus mutans serotype c (strain ATCC 700610 / UA159) protein is Carbamoyl phosphate synthase small chain.